The primary structure comprises 505 residues: Lysine--tRNA ligase (505 aa).

2 residues coordinate Mg(2+): glutamate 415 and glutamate 422.

The protein belongs to the class-II aminoacyl-tRNA synthetase family. As to quaternary structure, homodimer. The cofactor is Mg(2+).

The protein localises to the cytoplasm. It carries out the reaction tRNA(Lys) + L-lysine + ATP = L-lysyl-tRNA(Lys) + AMP + diphosphate. In Yersinia pseudotuberculosis serotype O:1b (strain IP 31758), this protein is Lysine--tRNA ligase.